A 1248-amino-acid polypeptide reads, in one-letter code: ABC transporter B family member 7 (1248 aa).

6 helical membrane passes run 32 to 52 (IVLM…QPFM), 82 to 102 (FLYL…CWMV), 158 to 175 (FTQL…AFIV), 179 to 201 (LTLA…TYIM), 261 to 281 (GLGI…AIWY), and 299 to 321 (VITS…NSFA). Residues 35–322 (MVIGTLSAMA…TLPSLNSFAA (288 aa)) enclose the ABC transmembrane type-1 1 domain. One can recognise an ABC transporter 1 domain in the interval 357–593 (IELRDVYFRY…PEGTYSQLVR (237 aa)). 392-399 (GQSGSGKS) contributes to the ATP binding site. Asn-473 and Asn-652 each carry an N-linked (GlcNAc...) asparagine glycan. A helical membrane pass occupies residues 682 to 702 (VLLLGSLAAVIHGIVFPVQGL). Residues 683 to 970 (LLLGSLAAVI…TSTMAPDINK (288 aa)) enclose the ABC transmembrane type-1 2 domain. Asn-720 carries N-linked (GlcNAc...) asparagine glycosylation. Residues 722–742 (SLFWALIFVALGLTDLIVIPL) traverse the membrane as a helical segment. A glycan (N-linked (GlcNAc...) asparagine) is linked at Asn-779. 4 consecutive transmembrane segments (helical) span residues 813–833 (IIGA…MALL), 834–854 (VAPV…GFGA), 914–934 (GSYL…SWLI), and 939–959 (ATFG…VGVT). In terms of domain architecture, ABC transporter 2 spans 1005–1242 (IELQHVSFRY…SGGAYASLVA (238 aa)). 1040-1047 (GESGSGKS) provides a ligand contact to ATP. N-linked (GlcNAc...) asparagine glycans are attached at residues Asn-1094, Asn-1193, and Asn-1244.

The protein belongs to the ABC transporter superfamily. ABCB family. Multidrug resistance exporter (TC 3.A.1.201) subfamily.

It is found in the membrane. The polypeptide is ABC transporter B family member 7 (ABCB7) (Arabidopsis thaliana (Mouse-ear cress)).